We begin with the raw amino-acid sequence, 208 residues long: Thymidylate kinase (208 aa).

ATP is bound at residue G10–T17.

The protein belongs to the thymidylate kinase family.

The enzyme catalyses dTMP + ATP = dTDP + ADP. Functionally, phosphorylation of dTMP to form dTDP in both de novo and salvage pathways of dTTP synthesis. This Listeria monocytogenes serotype 4b (strain CLIP80459) protein is Thymidylate kinase.